Consider the following 108-residue polypeptide: Inner membrane protein H108R (108 aa).

Residues 10-32 (LIVIITILITTRELSTTMLIVSL) form a helical membrane-spanning segment. Positions 49-64 (ENNTFSMPQKNSFSES) are enriched in polar residues. Residues 49 to 69 (ENNTFSMPQKNSFSESYNKDK) form a disordered region. Asn-50 is a glycosylation site (N-linked (GlcNAc...) asparagine; by host).

Belongs to the asfivirus H108R family.

It localises to the virion membrane. The sequence is that of Inner membrane protein H108R from Ornithodoros (relapsing fever ticks).